The following is a 156-amino-acid chain: Small ribosomal subunit protein uS7 (156 aa).

The protein belongs to the universal ribosomal protein uS7 family. Part of the 30S ribosomal subunit. Contacts proteins S9 and S11.

In terms of biological role, one of the primary rRNA binding proteins, it binds directly to 16S rRNA where it nucleates assembly of the head domain of the 30S subunit. Is located at the subunit interface close to the decoding center, probably blocks exit of the E-site tRNA. This is Small ribosomal subunit protein uS7 from Mycoplasmopsis pulmonis (strain UAB CTIP) (Mycoplasma pulmonis).